The following is a 466-amino-acid chain: Zinc finger protein NUTCRACKER (466 aa).

Residues 1–23 (MTSEVLQTISSGSGFAQPQSSST) show a composition bias toward polar residues. A disordered region spans residues 1–29 (MTSEVLQTISSGSGFAQPQSSSTLDHDES). S56 carries the phosphoserine modification. A C2H2-type 1 zinc finger spans residues 66-88 (FLCEVCGKGFQRDQNLQLHRRGH). T98 carries the post-translational modification Phosphothreonine; by KIN10. A C2H2-type 2 zinc finger spans residues 107 to 137 (YVCPEKTCVHHHSSRALGDLTGIKKHFCRKH). Positions 134 to 141 (CRKHGEKK) match the Nuclear localization signal motif. The C2H2-type 2; degenerate zinc-finger motif lies at 142–165 (WTCEKCAKRYAVQSDWKAHSKTCG). Positions 144, 147, 160, 164, 171, and 173 each coordinate Zn(2+). A CCHC-type 2; atypical zinc finger spans residues 169–192 (YRCDCGTIFSRRDSFITHRAFCDA). Phosphoserine; by KIN10 occurs at positions 178 and 182. An SHR-binding region spans residues 179-191 (RRDSFITHRAFCD). Residues H186 and C190 each contribute to the Zn(2+) site.

As to quaternary structure, interacts with AKIN10. Inhibition of transcription factor activity by KIN10-mediated phosphorylation at Thr-98, Ser-178 and Ser-182 under sugar deprivation conditions, thus delaying flowering. In terms of tissue distribution, highly expressed in vegetative organs and at lower levels in flowers and siliques. Expressed predominantly in roots. In roots, present in cortex, endodermis, and pericycle layer.

The protein localises to the nucleus. Its function is as follows. Transcription activator that binds to the DNA sequence 5'-CTTTTGTCC-3'. Regulates photoperiodic flowering by modulating sugar transport and metabolism. Regulates SUS1 and SUS4. Transcription factor that regulates tissue boundaries and asymmetric cell division. Contributes to the sequestration of 'SHORT-ROOT' to the nucleus. The protein is Zinc finger protein NUTCRACKER of Arabidopsis thaliana (Mouse-ear cress).